A 286-amino-acid chain; its full sequence is MSVTIEAALKAATEQLQQSGSDSPALDAAVLLCHVLAKPRSYLLTWPDKILEKPTLASLELLLARRRAGEPMAYILGEREFWSLPLKVSPSTLIPRPDTERLVELALDKAALIDGELLDLGTGTGAIALALASELPTRQVTGIDLRPEAAELARENATRLAIHNAQFFQGSWFSPLADGTKFALIVSNPPYIEENDPHLSLGDVRFEPKSALVAAENGLADIRHISTHAPHFLLDGGWLLFEHGYDQGVAVRTILRDLGYQNIITEQDYAGHDRVTLGQYKTEREA.

Residues 121–125, Asp-144, Trp-172, and Asn-188 each bind S-adenosyl-L-methionine; that span reads GTGTG. 188–191 serves as a coordination point for substrate; the sequence is NPPY.

Belongs to the protein N5-glutamine methyltransferase family. PrmC subfamily.

It carries out the reaction L-glutaminyl-[peptide chain release factor] + S-adenosyl-L-methionine = N(5)-methyl-L-glutaminyl-[peptide chain release factor] + S-adenosyl-L-homocysteine + H(+). Functionally, methylates the class 1 translation termination release factors RF1/PrfA and RF2/PrfB on the glutamine residue of the universally conserved GGQ motif. This chain is Release factor glutamine methyltransferase, found in Vibrio cholerae serotype O1 (strain ATCC 39315 / El Tor Inaba N16961).